The following is a 657-amino-acid chain: Probable Xaa-Pro aminopeptidase P (657 aa).

The Mn(2+) site is built by Asp-453, Asp-464, Glu-562, and Glu-576.

Belongs to the peptidase M24B family. The cofactor is Mn(2+).

The catalysed reaction is Release of any N-terminal amino acid, including proline, that is linked to proline, even from a dipeptide or tripeptide.. Catalyzes the removal of a penultimate prolyl residue from the N-termini of peptides. This Talaromyces marneffei (strain ATCC 18224 / CBS 334.59 / QM 7333) (Penicillium marneffei) protein is Probable Xaa-Pro aminopeptidase P (ampp).